Consider the following 647-residue polypeptide: Glutamyl-tRNA(Gln) amidotransferase subunit B, mitochondrial (647 aa).

The N-terminal 16 residues, 1–16 (MARNLCRNVQTTPRPL), are a transit peptide targeting the mitochondrion. Positions 39–77 (PRPRYFGSSTAKSAKKKSNNKAYSGSSMSAGDASAGPSR) are disordered. Low complexity predominate over residues 58–76 (NKAYSGSSMSAGDASAGPS).

Belongs to the GatB/GatE family. GatB subfamily. Subunit of the heterotrimeric GatCAB amidotransferase (AdT) complex, composed of A, B and C subunits.

The protein localises to the mitochondrion. The catalysed reaction is L-glutamyl-tRNA(Gln) + L-glutamine + ATP + H2O = L-glutaminyl-tRNA(Gln) + L-glutamate + ADP + phosphate + H(+). Its function is as follows. Allows the formation of correctly charged Gln-tRNA(Gln) through the transamidation of misacylated Glu-tRNA(Gln) in the mitochondria. The reaction takes place in the presence of glutamine and ATP through an activated gamma-phospho-Glu-tRNA(Gln). In Mycosarcoma maydis (Corn smut fungus), this protein is Glutamyl-tRNA(Gln) amidotransferase subunit B, mitochondrial.